The sequence spans 359 residues: Probable E3 ubiquitin-protein ligase LUL4 (359 aa).

The tract at residues 1–35 (MGISFSNNNRRRDNNNRRHLHHYPPPPPYYYLDPP) is disordered. Gly2 carries N-myristoyl glycine lipidation. Pro residues predominate over residues 23 to 35 (YPPPPPYYYLDPP). The segment at 148-267 (FVFDALFDGS…GSFKVKVVKQ (120 aa)) is DAR2 domain. An RING-type zinc finger spans residues 302 to 341 (CVICMTEAKDTAVLPCRHLCMCSDCAKELRLQSNKCPICR).

The protein belongs to the RING-type zinc finger family. LOG2 subfamily.

It carries out the reaction S-ubiquitinyl-[E2 ubiquitin-conjugating enzyme]-L-cysteine + [acceptor protein]-L-lysine = [E2 ubiquitin-conjugating enzyme]-L-cysteine + N(6)-ubiquitinyl-[acceptor protein]-L-lysine.. It participates in protein modification; protein ubiquitination. Acts as an E3 ubiquitin-protein ligase, or as part of E3 complex, which accepts ubiquitin from specific E2 ubiquitin-conjugating enzymes and then transfers it to substrates (in vitro). This is Probable E3 ubiquitin-protein ligase LUL4 (LUL4) from Arabidopsis thaliana (Mouse-ear cress).